Reading from the N-terminus, the 293-residue chain is Hydroxyquinol 1,2-dioxygenase (293 aa).

Residues Tyr-164, Tyr-197, His-221, and His-223 each contribute to the Fe cation site.

It belongs to the intradiol ring-cleavage dioxygenase family. Homodimer. Requires Fe(3+) as cofactor.

It catalyses the reaction benzene-1,2,4-triol + O2 = maleylacetate + 2 H(+). It participates in aromatic compound metabolism; beta-ketoadipate pathway; 3-oxoadipate from 3,4-dihydroxybenzoate: step 2/4. With respect to regulation, inhibited by 3,5-dichlorocatechol, chlorohydroquinone and 4,5-dibromocatechol. Its function is as follows. Catalyzes the ortho-cleavage of the aromatic ring of hydroxyquinol. This is Hydroxyquinol 1,2-dioxygenase (chqB) from Nocardioides simplex (Arthrobacter simplex).